The chain runs to 1279 residues: Myosin-1 (1279 aa).

The span at 1 to 12 (MAIVKRGGRTRA) shows a compositional bias: basic residues. Residues 1-25 (MAIVKRGGRTRAKQQQAPAKVNNGL) are disordered. The region spanning 48–736 (VGVSDLTLLS…TLFALEDMRD (689 aa)) is the Myosin motor domain. Position 141-148 (141-148 (GESGAGKT)) interacts with ATP. Ser371 is subject to Phosphoserine. Residues 419-502 (SIGILDIYGF…PGLFAALNDS (84 aa)) are actin-binding. IQ domains lie at 740-760 (HNMAARIQRAWRRYIKRKEDA) and 761-786 (AKTIQRAWRMKNHGNQFEQFRDYGNS). The TH1 domain occupies 794–984 (RRRFSMLGSR…SGTVTVNQGL (191 aa)). Composition is skewed to polar residues over residues 980-989 (VNQGLPPTSK) and 1018-1027 (AFQSQPTASY). Disordered stretches follow at residues 980–1001 (VNQGLPPTSKNPKRPRAKLGKV), 1014–1132 (LAQP…PKHP), 1189–1216 (SPSASAATQSYAPTTASSNPVSTASSNT), and 1253–1279 (LADALKKRQGVTRDDSDAEDDDDDDDW). Low complexity-rich tracts occupy residues 1038-1056 (TQLYATQHQPQQPQVPTRT) and 1067-1095 (STQTAAQVSTLPQAARKPAAPARPAKKIA). The segment covering 1116–1126 (APPPPPPPPAL) has biased composition (pro residues). An SH3 domain is found at 1129–1189 (PKHPTYRAMY…PIDYLQEESS (61 aa)). Polar residues predominate over residues 1189–1209 (SPSASAATQSYAPTTASSNPV). Acidic residues predominate over residues 1268 to 1279 (SDAEDDDDDDDW).

Belongs to the TRAFAC class myosin-kinesin ATPase superfamily. Myosin family. Phosphorylation of the TEDS site (Ser-371) is required for the polarization of the actin cytoskeleton. Phosphorylation probably activates the myosin-I ATPase activity.

Its subcellular location is the cytoplasm. The protein resides in the cytoskeleton. It is found in the actin patch. Its function is as follows. Type-I myosin implicated in the organization of the actin cytoskeleton. Required for proper actin cytoskeleton polarization. At the cell cortex, assembles in patch-like structures together with proteins from the actin-polymerizing machinery and promotes actin assembly. Functions as actin nucleation-promoting factor (NPF) for the Arp2/3 complex. In Lodderomyces elongisporus (strain ATCC 11503 / CBS 2605 / JCM 1781 / NBRC 1676 / NRRL YB-4239) (Yeast), this protein is Myosin-1 (MYO1).